A 155-amino-acid polypeptide reads, in one-letter code: Small ribosomal subunit protein uS7cz/uS7cy (155 aa).

Belongs to the universal ribosomal protein uS7 family. Part of the 30S ribosomal subunit.

The protein resides in the plastid. It is found in the chloroplast. Its function is as follows. One of the primary rRNA binding proteins, it binds directly to 16S rRNA where it nucleates assembly of the head domain of the 30S subunit. The chain is Small ribosomal subunit protein uS7cz/uS7cy (rps7-A) from Angiopteris evecta (Mule's foot fern).